A 549-amino-acid polypeptide reads, in one-letter code: Undecaprenyl phosphate-alpha-4-amino-4-deoxy-L-arabinose arabinosyl transferase (549 aa).

Transmembrane regions (helical) follow at residues 9 to 29 (LLLI…GLWI), 80 to 100 (LFGV…LAYL), 112 to 132 (SLAC…SGYA), 136 to 156 (PQFT…LDAG), 166 to 186 (ILLG…AWLL), 204 to 224 (LLGY…PWAL), 256 to 276 (PWWF…GLLP), 288 to 308 (QAPV…FSLS), 312 to 332 (LPTY…HALV), 346 to 366 (NGLL…YLQL), 376 to 396 (FELF…LAQW), and 402 to 422 (AWAA…AAMP).

The protein belongs to the glycosyltransferase 83 family.

The protein localises to the cell inner membrane. It carries out the reaction 4-amino-4-deoxy-alpha-L-arabinopyranosyl di-trans,octa-cis-undecaprenyl phosphate + lipid IVA = lipid IIA + di-trans,octa-cis-undecaprenyl phosphate.. The protein operates within lipopolysaccharide metabolism; 4-amino-4-deoxy-beta-L-arabinose-lipid A biosynthesis. In terms of biological role, catalyzes the transfer of the L-Ara4N moiety of the glycolipid undecaprenyl phosphate-alpha-L-Ara4N to lipid A. The modified arabinose is attached to lipid A and is required for resistance to polymyxin and cationic antimicrobial peptides. The polypeptide is Undecaprenyl phosphate-alpha-4-amino-4-deoxy-L-arabinose arabinosyl transferase (Pseudomonas aeruginosa (strain UCBPP-PA14)).